Reading from the N-terminus, the 265-residue chain is uncharacterized protein (265 aa).

This is an uncharacterized protein from Autographa californica nuclear polyhedrosis virus (AcMNPV).